Reading from the N-terminus, the 545-residue chain is MPSASWEDLAADKRARLEKSIPDEWKFKSVPIEGSVIDLPEKSGILSPSEIKITNSSATELVAQLANGTLKSVDVTLAFCKRAALAHQLVNCAHDFFPELALAQARELDRYFETHKKPVGPLHGLPISLKDQLRVKGTETCMAYISWLGKRDTSDSILTALLRKAGAVFLVKTSVPQTLMVCETVNNIIGRTSNPRNLNLSCGGSSGGEGAMIAMRGGAIGIGTDIGGSIRVPAAFNSLYGIRPSHGRLPYGGMTNSMEGQETIHSVVGPIAHSAQDVRLFLQSVLKEEPWKYDSKVIPLPWREAEENAAQAKIAEKSLNFAFYDFDGVVRPHPPITRGVEIVRSTLEKDGHTVAPWTPYKHAFAVDLANKIYAADGSTDVYKHINASGEPAIPNIKDLMNPNLPKADLNEVWDAQLQKWRYQCEYLDKWREWEERTGKELDAIIAPVAATAAVRHNQFRYYGYATVFNVLDYTSVVVPVTYADKAVDHRLADYQPVSDMDKAVYAEYDPEVYHGAPVAVQIIGRRLSEERTLAIAEYVGKLLGH.

Active-site charge relay system residues include K130 and S205. S229 acts as the Acyl-ester intermediate in catalysis.

It belongs to the amidase family.

It carries out the reaction a monocarboxylic acid amide + H2O = a monocarboxylate + NH4(+). It catalyses the reaction acetamide + H2O = acetate + NH4(+). Its function is as follows. Allows acetamide to be used as a sole carbon or nitrogen source. The protein is Acetamidase (amdS) of Aspergillus oryzae (strain ATCC 42149 / RIB 40) (Yellow koji mold).